Consider the following 61-residue polypeptide: Insect toxin AaHIT5 (61 aa).

The LCN-type CS-alpha/beta domain occupies 1 to 61 (DGYIKRHDGC…AWKSETNTCD (61 aa)). Intrachain disulfides connect C10/C60, C14/C35, C21/C42, and C25/C44.

Expressed by the venom gland.

The protein resides in the secreted. Functionally, excitatory insect toxins induce a spastic paralysis. They bind voltage-independently to sodium channels (Nav) and shift the voltage of activation toward more negative potentials thereby affecting sodium channel activation and promoting spontaneous and repetitive firing. This toxin elicits excitatory activity with no flaccid paralysis despite its high degree of sequence similarity with other depressant insect toxins. This toxin is active only on insects. In Androctonus australis (Sahara scorpion), this protein is Insect toxin AaHIT5.